We begin with the raw amino-acid sequence, 225 residues long: Thymidylate kinase (225 aa).

10–17 provides a ligand contact to ATP; that stretch reads GPEGAGKT.

This sequence belongs to the thymidylate kinase family.

It carries out the reaction dTMP + ATP = dTDP + ADP. In terms of biological role, phosphorylation of dTMP to form dTDP in both de novo and salvage pathways of dTTP synthesis. The protein is Thymidylate kinase of Geobacillus thermodenitrificans (strain NG80-2).